The chain runs to 141 residues: Nucleoside diphosphate kinase (141 aa).

Residues Lys-11, Phe-59, Arg-87, Thr-93, Arg-104, and Asn-114 each contribute to the ATP site. His-117 serves as the catalytic Pros-phosphohistidine intermediate.

The protein belongs to the NDK family. Homotetramer. Mg(2+) serves as cofactor.

It is found in the cytoplasm. It carries out the reaction a 2'-deoxyribonucleoside 5'-diphosphate + ATP = a 2'-deoxyribonucleoside 5'-triphosphate + ADP. The catalysed reaction is a ribonucleoside 5'-diphosphate + ATP = a ribonucleoside 5'-triphosphate + ADP. Functionally, major role in the synthesis of nucleoside triphosphates other than ATP. The ATP gamma phosphate is transferred to the NDP beta phosphate via a ping-pong mechanism, using a phosphorylated active-site intermediate. This Neisseria meningitidis serogroup A / serotype 4A (strain DSM 15465 / Z2491) protein is Nucleoside diphosphate kinase.